Reading from the N-terminus, the 413-residue chain is Eukaryotic initiation factor 4A-11 (413 aa).

Positions 40-68 (ESFDAMGLQENLLRGIYAYGFEKPSAIQQ) match the Q motif motif. The 171-residue stretch at 71-241 (IVPFCKGLDV…RKFMNKPVRI (171 aa)) folds into the Helicase ATP-binding domain. Residue 84-91 (AQSGTGKT) participates in ATP binding. The short motif at 189 to 192 (DEAD) is the DEAD box element. The Helicase C-terminal domain maps to 252-413 (GIKQFYVNVD…ELPANVADLL (162 aa)).

Belongs to the DEAD box helicase family. eIF4A subfamily. EIF4F is a multi-subunit complex, the composition of which varies with external and internal environmental conditions. It is composed of at least EIF4A, EIF4E and EIF4G.

It carries out the reaction ATP + H2O = ADP + phosphate + H(+). Its function is as follows. ATP-dependent RNA helicase which is a subunit of the eIF4F complex involved in cap recognition and is required for mRNA binding to ribosome. In the current model of translation initiation, eIF4A unwinds RNA secondary structures in the 5'-UTR of mRNAs which is necessary to allow efficient binding of the small ribosomal subunit, and subsequent scanning for the initiator codon. This is Eukaryotic initiation factor 4A-11 from Nicotiana tabacum (Common tobacco).